The primary structure comprises 728 residues: Probable LRR receptor-like serine/threonine-protein kinase At1g14390 (728 aa).

Residues M1 to S27 form the signal peptide. At Q28–L356 the chain is on the extracellular side. N55 and N85 each carry an N-linked (GlcNAc...) asparagine glycan. 9 LRR repeats span residues N74 to S96, L106 to L130, S131 to L155, N157 to L178, S179 to N202, I204 to L224, N225 to L248, P249 to N272, and K274 to S295. N-linked (GlcNAc...) asparagine glycans are attached at residues N138 and N169. N-linked (GlcNAc...) asparagine glycosylation occurs at N210. N253 and N267 each carry an N-linked (GlcNAc...) asparagine glycan. The chain crosses the membrane as a helical span at residues V357–V377. Residues R378–L728 are Cytoplasmic-facing. In terms of domain architecture, Protein kinase spans T421 to I709.

The protein belongs to the protein kinase superfamily. Ser/Thr protein kinase family.

The protein localises to the membrane. It catalyses the reaction L-seryl-[protein] + ATP = O-phospho-L-seryl-[protein] + ADP + H(+). The enzyme catalyses L-threonyl-[protein] + ATP = O-phospho-L-threonyl-[protein] + ADP + H(+). In Arabidopsis thaliana (Mouse-ear cress), this protein is Probable LRR receptor-like serine/threonine-protein kinase At1g14390.